Consider the following 255-residue polypeptide: tRNA (guanine-N(1)-)-methyltransferase (255 aa).

S-adenosyl-L-methionine is bound by residues glycine 113 and 133–138 (IGDYVL).

This sequence belongs to the RNA methyltransferase TrmD family. In terms of assembly, homodimer.

The protein resides in the cytoplasm. It catalyses the reaction guanosine(37) in tRNA + S-adenosyl-L-methionine = N(1)-methylguanosine(37) in tRNA + S-adenosyl-L-homocysteine + H(+). Its function is as follows. Specifically methylates guanosine-37 in various tRNAs. The protein is tRNA (guanine-N(1)-)-methyltransferase of Salmonella choleraesuis (strain SC-B67).